Reading from the N-terminus, the 36-residue chain is Pancreatic polypeptide (36 aa).

Tyr36 carries the tyrosine amide modification.

It belongs to the NPY family.

The protein resides in the secreted. Hormone secreted by pancreatic cells that acts as a regulator of pancreatic and gastrointestinal functions. The polypeptide is Pancreatic polypeptide (PPY) (Meleagris gallopavo (Wild turkey)).